A 295-amino-acid chain; its full sequence is MDNKLNIVIITGMSGAGKTVAIQSFEDMGYFTVDNMPPNLIEKFVGLLNTPDNKIDKVALVVDMRSRAFFEDIQSIVTELTDNTSVNFKLLFLDANDTELVSRYKETRRSHPLAIDGRTLDGITKEREILADLKNLSEVVIDTSELTPRNLRARILQKFATSTESTFRIEVMSFGFKYGLPLDADLVFDVRFLPNPHYISELRDKNGTDQEVYDYVMEHPQSEEFYQNLMKMLVPILPAYKKEGKSVLTIAFGCTGGQHRSVAFAERVSAALREKWHLNVSHRDKDRRKETVNRS.

12 to 19 (GMSGAGKT) is an ATP binding site. Position 63–66 (63–66 (DMRS)) interacts with GTP.

The protein belongs to the RapZ-like family.

Functionally, displays ATPase and GTPase activities. The protein is Nucleotide-binding protein LACR_1047 of Lactococcus lactis subsp. cremoris (strain SK11).